Consider the following 469-residue polypeptide: Phenylalanine--tRNA ligase, mitochondrial (469 aa).

A mitochondrion-targeting transit peptide spans 1-17; it reads MFLNRMMKTRTGLYRLY. Substrate is bound by residues 126-129, Arg-155, 162-164, 169-171, Glu-302, and Phe-329; these read SAHE, THY, and QME. The region spanning 372 to 469 is the FDX-ACB domain; it reads SKHPGSFRDV…LVKEYSVELR (98 aa).

It belongs to the class-II aminoacyl-tRNA synthetase family. Monomer.

The protein resides in the mitochondrion matrix. The catalysed reaction is tRNA(Phe) + L-phenylalanine + ATP = L-phenylalanyl-tRNA(Phe) + AMP + diphosphate + H(+). Is responsible for the charging of tRNA(Phe) with phenylalanine in mitochondrial translation. The chain is Phenylalanine--tRNA ligase, mitochondrial (MSF1) from Saccharomyces cerevisiae (strain ATCC 204508 / S288c) (Baker's yeast).